Consider the following 332-residue polypeptide: DNA-directed RNA polymerase subunit alpha (332 aa).

The alpha N-terminal domain (alpha-NTD) stretch occupies residues 1 to 231; it reads MQTNLLKPKT…EQLAVFAQLD (231 aa). The interval 252 to 332 is alpha C-terminal domain (alpha-CTD); the sequence is FDPILLRPVD…NWPPAGLEKR (81 aa).

Belongs to the RNA polymerase alpha chain family. Homodimer. The RNAP catalytic core consists of 2 alpha, 1 beta, 1 beta' and 1 omega subunit. When a sigma factor is associated with the core the holoenzyme is formed, which can initiate transcription.

It carries out the reaction RNA(n) + a ribonucleoside 5'-triphosphate = RNA(n+1) + diphosphate. Functionally, DNA-dependent RNA polymerase catalyzes the transcription of DNA into RNA using the four ribonucleoside triphosphates as substrates. This is DNA-directed RNA polymerase subunit alpha from Delftia acidovorans (strain DSM 14801 / SPH-1).